Here is a 260-residue protein sequence, read N- to C-terminus: Imidazole glycerol phosphate synthase subunit HisF (260 aa).

Residues aspartate 11 and aspartate 130 contribute to the active site.

The protein belongs to the HisA/HisF family. As to quaternary structure, heterodimer of HisH and HisF.

It is found in the cytoplasm. The enzyme catalyses 5-[(5-phospho-1-deoxy-D-ribulos-1-ylimino)methylamino]-1-(5-phospho-beta-D-ribosyl)imidazole-4-carboxamide + L-glutamine = D-erythro-1-(imidazol-4-yl)glycerol 3-phosphate + 5-amino-1-(5-phospho-beta-D-ribosyl)imidazole-4-carboxamide + L-glutamate + H(+). It functions in the pathway amino-acid biosynthesis; L-histidine biosynthesis; L-histidine from 5-phospho-alpha-D-ribose 1-diphosphate: step 5/9. In terms of biological role, IGPS catalyzes the conversion of PRFAR and glutamine to IGP, AICAR and glutamate. The HisF subunit catalyzes the cyclization activity that produces IGP and AICAR from PRFAR using the ammonia provided by the HisH subunit. The sequence is that of Imidazole glycerol phosphate synthase subunit HisF from Desulfatibacillum aliphaticivorans.